A 191-amino-acid polypeptide reads, in one-letter code: Nucleoside triphosphate pyrophosphatase (191 aa).

The active-site Proton acceptor is aspartate 70.

The protein belongs to the Maf family. Requires a divalent metal cation as cofactor.

The protein resides in the cytoplasm. The catalysed reaction is a ribonucleoside 5'-triphosphate + H2O = a ribonucleoside 5'-phosphate + diphosphate + H(+). It catalyses the reaction a 2'-deoxyribonucleoside 5'-triphosphate + H2O = a 2'-deoxyribonucleoside 5'-phosphate + diphosphate + H(+). Functionally, nucleoside triphosphate pyrophosphatase. May have a dual role in cell division arrest and in preventing the incorporation of modified nucleotides into cellular nucleic acids. The chain is Nucleoside triphosphate pyrophosphatase from Synechococcus sp. (strain WH7803).